Here is a 317-residue protein sequence, read N- to C-terminus: Lysosomal-associated transmembrane protein 4B (317 aa).

A disordered region spans residues 25–73 (AFGAKGTDPAEARSSRGIEEAGPRAHGRAGREPERRRSRQQRRGGLQAR). Residues 32 to 59 (DPAEARSSRGIEEAGPRAHGRAGREPER) are compositionally biased toward basic and acidic residues. A run of 4 helical transmembrane segments spans residues 117 to 137 (ILLG…LLSA), 163 to 183 (MCIA…ATYG), 191 to 211 (WIIP…LVAI), and 244 to 264 (CLVL…GYLI). The segment at 205–221 (LNMLVAITVLIYPNSIQ) is required for NEDD4 interaction.

This sequence belongs to the LAPTM4/LAPTM5 transporter family. In terms of assembly, homooligomer; upon reaching the lysosomes. Interacts with MCOLN1. Interacts with NEDD4; may play a role in the lysosomal sorting of LAPTM4B; enhances HGS association with NEDD4; mediates inhibition of EGFR degradation. Interacts with PIP5K1C; promotes SNX5 association with LAPTM4B; kinase activity of PIP5K1C is required; interaction is regulated by phosphatidylinositol 4,5-bisphosphate generated by PIP5K1C. Interacts with HGS; promotes HGS ubiquitination. Interacts with SNX5. Interacts with SLC3A2 and SLC7A5; recruits SLC3A2 and SLC7A5 to lysosomes to promote leucine uptake into these organelles and is required for mTORC1 activation. Interacts with LRRC32; decreases TGFB1 production in regulatory T cells. Interacts with BECN1; competes with EGFR for LAPTM4B binding; regulates EGFR activity. Interacts with EGFR; positively correlates with EGFR activation. In terms of processing, undergoes proteolytic cleavage following delivery to the lysosomes. Ubiquitinated by NEDD4.

The protein resides in the endomembrane system. It localises to the late endosome membrane. It is found in the cell membrane. Its subcellular location is the cell projection. The protein localises to the lysosome membrane. The protein resides in the endosome membrane. It localises to the endosome. It is found in the multivesicular body membrane. Its subcellular location is the multivesicular body lumen. Its function is as follows. Required for optimal lysosomal function. Blocks EGF-stimulated EGFR intraluminal sorting and degradation. Conversely by binding with the phosphatidylinositol 4,5-bisphosphate, regulates its PIP5K1C interaction, inhibits HGS ubiquitination and relieves LAPTM4B inhibition of EGFR degradation. Recruits SLC3A2 and SLC7A5 (the Leu transporter) to the lysosome, promoting entry of leucine and other essential amino acid (EAA) into the lysosome, stimulating activation of proton-transporting vacuolar (V)-ATPase protein pump (V-ATPase) and hence mTORC1 activation. Plays a role as negative regulator of TGFB1 production in regulatory T cells. Binds ceramide and facilitates its exit from late endosome in order to control cell death pathways. The chain is Lysosomal-associated transmembrane protein 4B from Homo sapiens (Human).